The following is a 194-amino-acid chain: MSLVPIVVEQTNRGERSYDIYSRLLKDRIIVLSDEINDVTASLVVAQMLFLEAEDPDKDIQLYINSPGGSVTAGFAIYDTMQYVKPDVSTICIGMAASMGAFLLAAGAKGKRFALPNSEIMIHQPLGGARGQATDIKIHAEQIIKIKNKLNRILSERTGQPFEKIERDTERDFFMSAEEAKAYGIVDEVMERRK.

Ser-98 acts as the Nucleophile in catalysis. The active site involves His-123.

The protein belongs to the peptidase S14 family. Fourteen ClpP subunits assemble into 2 heptameric rings which stack back to back to give a disk-like structure with a central cavity, resembling the structure of eukaryotic proteasomes.

Its subcellular location is the cytoplasm. The catalysed reaction is Hydrolysis of proteins to small peptides in the presence of ATP and magnesium. alpha-casein is the usual test substrate. In the absence of ATP, only oligopeptides shorter than five residues are hydrolyzed (such as succinyl-Leu-Tyr-|-NHMec, and Leu-Tyr-Leu-|-Tyr-Trp, in which cleavage of the -Tyr-|-Leu- and -Tyr-|-Trp bonds also occurs).. Functionally, cleaves peptides in various proteins in a process that requires ATP hydrolysis. Has a chymotrypsin-like activity. Plays a major role in the degradation of misfolded proteins. This chain is ATP-dependent Clp protease proteolytic subunit, found in Acetivibrio thermocellus (strain ATCC 27405 / DSM 1237 / JCM 9322 / NBRC 103400 / NCIMB 10682 / NRRL B-4536 / VPI 7372) (Clostridium thermocellum).